A 426-amino-acid polypeptide reads, in one-letter code: Serine--tRNA ligase (426 aa).

Position 233–235 (Thr233–Glu235) interacts with L-serine. Arg264 to Glu266 contacts ATP. Residue Glu287 participates in L-serine binding. Position 351–354 (Glu351–Ser354) interacts with ATP. Ser387 provides a ligand contact to L-serine.

The protein belongs to the class-II aminoacyl-tRNA synthetase family. Type-1 seryl-tRNA synthetase subfamily. In terms of assembly, homodimer. The tRNA molecule binds across the dimer.

It localises to the cytoplasm. The catalysed reaction is tRNA(Ser) + L-serine + ATP = L-seryl-tRNA(Ser) + AMP + diphosphate + H(+). It catalyses the reaction tRNA(Sec) + L-serine + ATP = L-seryl-tRNA(Sec) + AMP + diphosphate + H(+). The protein operates within aminoacyl-tRNA biosynthesis; selenocysteinyl-tRNA(Sec) biosynthesis; L-seryl-tRNA(Sec) from L-serine and tRNA(Sec): step 1/1. Catalyzes the attachment of serine to tRNA(Ser). Is also able to aminoacylate tRNA(Sec) with serine, to form the misacylated tRNA L-seryl-tRNA(Sec), which will be further converted into selenocysteinyl-tRNA(Sec). This Xylella fastidiosa (strain M23) protein is Serine--tRNA ligase.